The chain runs to 220 residues: Deoxyribose-phosphate aldolase 2 (220 aa).

D89 (proton donor/acceptor) is an active-site residue. Catalysis depends on K151, which acts as the Schiff-base intermediate with acetaldehyde. K180 serves as the catalytic Proton donor/acceptor.

This sequence belongs to the DeoC/FbaB aldolase family. DeoC type 1 subfamily.

Its subcellular location is the cytoplasm. The enzyme catalyses 2-deoxy-D-ribose 5-phosphate = D-glyceraldehyde 3-phosphate + acetaldehyde. Its pathway is carbohydrate degradation; 2-deoxy-D-ribose 1-phosphate degradation; D-glyceraldehyde 3-phosphate and acetaldehyde from 2-deoxy-alpha-D-ribose 1-phosphate: step 2/2. Catalyzes a reversible aldol reaction between acetaldehyde and D-glyceraldehyde 3-phosphate to generate 2-deoxy-D-ribose 5-phosphate. The protein is Deoxyribose-phosphate aldolase 2 of Staphylococcus aureus (strain MRSA252).